Here is a 189-residue protein sequence, read N- to C-terminus: Nuclear distribution protein nudE homolog 1 (189 aa).

Positions 4–121 (NLDLETAIQI…LRVSKEEATS (118 aa)) form a coiled coil. The segment covering 114 to 126 (VSKEEATSGETRR) has biased composition (basic and acidic residues). Positions 114–139 (VSKEEATSGETRRNTRSLPSQNKKMK) are disordered.

It belongs to the nudE family. Self-associates. Interacts with PAC1.

Its subcellular location is the nucleus. It is found in the cytoplasm. It localises to the cytoskeleton. Required for nuclear migration to the bud neck during cell division. Targets cytoplasmic dynein to microtubule plus ends thereby promoting dynein-mediated microtubule sliding along the bud cortex and consequently the movement of the mitotic spindle to the bud neck. The sequence is that of Nuclear distribution protein nudE homolog 1 (NDL1) from Saccharomyces cerevisiae (strain ATCC 204508 / S288c) (Baker's yeast).